The chain runs to 258 residues: MSASRIRAKCFRLGQRCHTRFYDVLKKDIDNVRRGFADAFNPRLAKLLSPLSHVDVQRAVRISMSFEVNLGRRRPDCVCIIQTESSGAGKTVCFIVELKSCRFSANIHTPTKYHQFCEGMRQLRDTVALIKETTPTGSDEIMVTPLLVFVSQRGLNLLQVTRLPPKVIHGNLVMLASHLENVAEYTPPIRSVRERRRLCKKKIHVCSLAKKRAKSCHRSALTKFEENAACGVDLPLRRPSLGACGGILQSITGMFSHG.

The protein belongs to the herpesviridae UL24 family.

The protein localises to the virion. It is found in the host cytoplasm. It localises to the host nucleus. The protein resides in the host nucleolus. Its subcellular location is the host Golgi apparatus. Its function is as follows. May participate in nuclear egress of viral particles. Plays a role in the dispersal of several host nucleolar proteins including NCL/nucleolin and NPM1. Since deletion of host NCL/nucleolin negatively impact on nuclear egress, UL24 supposedly acts on this process through its effect on host nucleoli. The chain is Protein UL24 homolog from Homo sapiens (Human).